The chain runs to 415 residues: Tyrosine--tRNA ligase (415 aa).

Positions 54–63 match the 'HIGH' region motif; the sequence is PTGTDIHIGH. Positions 248–252 match the 'KMSKS' region motif; it reads KMSKS. Position 251 (Lys251) interacts with ATP. The region spanning 351-415 is the S4 RNA-binding domain; it reads AKAFYLFSKM…GKKKFLRVST (65 aa).

This sequence belongs to the class-I aminoacyl-tRNA synthetase family. TyrS type 2 subfamily. As to quaternary structure, homodimer.

It localises to the cytoplasm. It carries out the reaction tRNA(Tyr) + L-tyrosine + ATP = L-tyrosyl-tRNA(Tyr) + AMP + diphosphate + H(+). Functionally, catalyzes the attachment of tyrosine to tRNA(Tyr) in a two-step reaction: tyrosine is first activated by ATP to form Tyr-AMP and then transferred to the acceptor end of tRNA(Tyr). The polypeptide is Tyrosine--tRNA ligase (Prochlorococcus marinus (strain NATL2A)).